Consider the following 37-residue polypeptide: Large ribosomal subunit protein bL36 (37 aa).

Belongs to the bacterial ribosomal protein bL36 family.

The polypeptide is Large ribosomal subunit protein bL36 (Francisella tularensis subsp. tularensis (strain FSC 198)).